A 122-amino-acid polypeptide reads, in one-letter code: Large ribosomal subunit protein uL14c (122 aa).

It belongs to the universal ribosomal protein uL14 family. As to quaternary structure, part of the 50S ribosomal subunit.

The protein localises to the plastid. The protein resides in the chloroplast. In terms of biological role, binds to 23S rRNA. The protein is Large ribosomal subunit protein uL14c of Stigeoclonium helveticum (Green alga).